A 7094-amino-acid chain; its full sequence is Replicase polyprotein 1ab (7094 aa).

The CoV Nsp1 globular domain maps to 54 to 196 (PENHVMVDCR…PWVMYLRKCG (143 aa)). The 31-residue stretch at 216-246 (FKVEDAYDLVHDEPKGKFSKKAYALIRGYRG) folds into the BetaCoV Nsp1 C-terminal domain. Residues 250 to 519 (LLYVDQYGCD…LICKALYLDY (270 aa)) form the CoV Nsp2 N-terminal domain. Zn(2+) is bound by residues Cys392, Cys397, Cys413, and Cys416. Residues 392-416 (CEQDLCDFKGWVPGNMIDGFACTTC) form a C4 region. In terms of domain architecture, CoV Nsp2 middle spans 524–713 (CGNLHQRELL…AQAFRSVAKV (190 aa)). The 119-residue stretch at 733 to 851 (RRRICLSGSK…LDQAWRVPCA (119 aa)) folds into the CoV Nsp2 C-terminal domain. The region spanning 853 to 966 (RCVTFKEQPT…LYCAFTAPED (114 aa)) is the Ubiquitin-like 1 domain. Acidic residues predominate over residues 972–986 (ESGVEEDDVEGEETD). The interval 972-992 (ESGVEEDDVEGEETDLTVTSA) is disordered. Residues 1036–1274 (DLESVIQDYE…IAQLYGSCIT (239 aa)) form the Peptidase C16 1 domain. Cys1074 (for PL1-PRO activity) is an active-site residue. 4 residues coordinate Zn(2+): Cys1151, Cys1154, Cys1177, and Cys1179. The segment at 1151 to 1179 (CIKCDLALKLKGLDAMFFYGDVVSHVCKC) adopts a C4-type 1 zinc-finger fold. Residues His1225 and Asp1236 each act as for PL1-PRO activity in the active site. Positions 1275–1435 (PNVCFVKGDI…LISKCQITAV (161 aa)) constitute a Macro domain. The region spanning 1491 to 1563 (DDARTFVQSN…VAQIKALFLD (73 aa)) is the DPUP domain. The Ubiquitin-like 2 domain maps to 1562–1617 (LDKVDILLTVDGVNFTNRFVPVGESFGKSLGNVFCDGVNVTKHKCDINYKGKVFFQ). The Peptidase C16 2 domain occupies 1631–1892 (SSFNFDQKEL…KIEYKPDLSQ (262 aa)). The active-site For PL2-PRO activity is Cys1671. The Zn(2+) site is built by Cys1749, Cys1751, Cys1783, and Cys1785. The C4-type 2 zinc finger occupies 1749–1785 (CKCGVKQEQRTGVDAVMHFGTLSREDLEIGYTVDCSC). Catalysis depends on for PL2-PRO activity residues His1828 and Asp1842. The Nucleic acid-binding domain maps to 1906-2007 (IKAQFKTFEK…TYFNRPLLVD (102 aa)). One can recognise a G2M domain in the interval 2020 to 2169 (DDGGDISESD…ADNKVIYTTE (150 aa)). 3 helical membrane passes run 2138 to 2158 (ISACFNFIKWLFVLLFGWIKI), 2199 to 2219 (ACIIATIFLLWFNFIYANVIF), and 2221 to 2241 (DFYLPKIGFLPTFVGKIAQWI). Residues 2138–2385 (ISACFNFIKW…ASFIKLFSLF (248 aa)) are HD1. The 3Ecto domain occupies 2235–2296 (GKIAQWIKNT…AIDVVQYEAD (62 aa)). Cystine bridges form between Cys2251-Cys2275 and Cys2266-Cys2272. 3 helical membrane-spanning segments follow: residues 2313 to 2333 (LIVSYALYTAWFYPLFALISI), 2343 to 2363 (LFMLSTLHWSVRLLVSLANML), and 2365 to 2385 (AHVFMRFYIIIASFIKLFSLF). Positions 2383–2473 (SLFRHVAYGC…ELKRPIQPTD (91 aa)) are Y1. Residues 2383 to 2750 (SLFRHVAYGC…LTTPFSLKGG (368 aa)) enclose the CoV Nsp3 Y domain. Zn(2+)-binding residues include His2387, Cys2392, Cys2397, Cys2400, Cys2433, His2436, Cys2440, and Cys2443. A ZF1 region spans residues 2387–2400 (HVAYGCSKSGCLFC). Residues 2433 to 2443 (CSKHQWNCIDC) are ZF2. A Y2 region spans residues 2474–2566 (VAYHTVTDVK…MVDKNLITTA (93 aa)). Residues 2474–2750 (VAYHTVTDVK…LTTPFSLKGG (277 aa)) are coV-Y. The interval 2567–2649 (NTGTSVTETM…DSVMSAVSAG (83 aa)) is Y3. Residues 2650–2750 (LELTDESCNN…LTTPFSLKGG (101 aa)) form a Y4 region. Helical transmembrane passes span 2752–2772 (VFSYFVYVCFVLSLVCFIGLW), 3031–3051 (ASSIAGAILAVIVVLVFYYLI), 3063–3083 (IVFVNVIVWCVNFMMLFVFQV), 3090–3110 (VYAICYFYATLYFPSEISVIM), and 3115–3135 (LVMYGTIMPLWFCLLYISVVV). Positions 2752-3135 (VFSYFVYVCF…FCLLYISVVV (384 aa)) are HD2. One can recognise a Nsp4C domain in the interval 3149–3246 (LGTSVRSDGT…TASVSTSFLQ (98 aa)). Positions 3247-3549 (SGIVKMVNPT…YQQLAGIKLQ (303 aa)) constitute a Peptidase C30 domain. Residues His3287 and Cys3391 each act as for 3CL-PRO activity in the active site. The next 7 helical transmembrane spans lie at 3558–3578 (GIVCWIMASTFLFSCIITAFV), 3588–3608 (TNMLSITFCALCVISLTMLLV), 3615–3635 (LTMYIIPVLFTLLYNNYLVVY), 3657–3677 (TYTDEVIYGMLLLIGMVFVTL), 3684–3704 (LFSFIMFVGRVISVVSLWYMG), 3711–3731 (ILLMLASLFGTYTWTTALSMA), and 3755–3775 (IVLVCYLFIGYIISCYWGLFS). Residues 3558–3775 (GIVCWIMAST…IISCYWGLFS (218 aa)) are HD3. One can recognise a RdRp Nsp7 cofactor domain in the interval 3837–3925 (SKLTDVKCAN…DYAKDNTVLQ (89 aa)). One can recognise a RdRp Nsp8 cofactor domain in the interval 3926-4122 (ALQSEFVNMA…HNEVSATALQ (197 aa)). The Nsp9 ssRNA-binding domain occupies 4123–4232 (NNELMPAKLK…GTISSTVRLQ (110 aa)). Residues 4233-4370 (AGTATEYASN…CVSTDTTVQS (138 aa)) enclose the ExoN/MTase coactivator domain. The Zn(2+) site is built by Cys4306, Cys4309, His4315, Cys4322, Cys4348, Cys4351, Cys4359, and Cys4361. 2 zinc fingers span residues 4306–4322 (CIYCRARVEHPDVDGLC) and 4348–4361 (CQVCGFWRDGSCSC). Residues 4375-4630 (FLNRVRGTSV…DCELYVNNAY (256 aa)) form the NiRAN domain. 2 residues coordinate Mn(2+): Asn4578 and Asp4587. The Nsp12 Interface domain maps to 4631-4729 (RLFDLVQYDF…MNMDVDTHRY (99 aa)). Zn(2+)-binding residues include His4660, Cys4666, Cys4671, Cys4675, and Cys4852. The 568-residue stretch at 4730 to 5297 (RLSLKDLLLY…NMYLRSAVMQ (568 aa)) folds into the Nsp12 RNA-dependent RNA polymerase domain. Positions 4732–4946 (SLKDLLLYAA…HQKCLKSIAA (215 aa)) are rdRp Fingers N-ter. Residues 4947–4985 (TRGVPVVIGTTKFYGGWDDMLRRLIKDVDNPVLMGWDYP) are rdRp Palm N-ter. The 163-residue stretch at 4977–5139 (PVLMGWDYPK…CYNSDYASKG (163 aa)) folds into the RdRp catalytic domain. The segment at 4986–5044 (KCDRAMPNILRIVSSLVLARKHEACCSQSDRFYRLANEYAQVLSEIVMCGGCYYVKPGG) is rdRp Fingers C-ter. 3 residues coordinate Zn(2+): His5007, Cys5010, and Cys5011. Positions 5045 to 5180 (TSSGDATTAF…NNGPHEFCSQ (136 aa)) are rdRp Palm C-ter. Residues Ser5124, Asp5125, and Asp5126 contribute to the active site. Residues 5181-5297 (HTMLVKMDGD…NMYLRSAVMQ (117 aa)) form a rdRp Thumb region. Residues 5298 to 5410 (SVGACVVCSS…DDFNRIASCK (113 aa)) enclose the CV ZBD domain. Zn(2+)-binding residues include Cys5302, Cys5305, Cys5313, Cys5316, Cys5323, Cys5326, His5330, His5336, Cys5347, Cys5352, Cys5369, and His5372. The (+)RNA virus helicase ATP-binding domain maps to 5553–5734 (SVLETFQNNV…MCCLGPDIFL (182 aa)). 5578 to 5585 (GPPGTGKS) is a binding site for ATP. Residues 5735-5904 (GTCYRCPKEI…VETRVQCSTN (170 aa)) enclose the (+)RNA virus helicase C-terminal domain. One can recognise an ExoN domain in the interval 5971–6186 (LFITKEEAVK…RCLAVYDCFC (216 aa)). Residues Asp5989, Glu5991, and Glu6090 contribute to the active site. 7 residues coordinate Zn(2+): Cys6106, Cys6109, Cys6125, His6128, His6156, Cys6160, and His6163. Catalysis depends on residues His6167 and Asp6172. Zn(2+) is bound at residue Cys6178. The N7-MTase domain maps to 6195–6421 (YPIISNELSI…NLWNTFTKLQ (227 aa)). An S-adenosyl-L-methionine-binding site is contributed by 6230 to 6236 (DIGNPKA). A gpppA-binding region spans residues 6308 to 6322 (CNGGSLYVNKHAFHT). Positions 6346, 6367, 6378, and 6381 each coordinate Zn(2+). The 61-residue stretch at 6422–6482 (SLENVVYNLV…NVAVELFAKR (61 aa)) folds into the Nsp15 N-terminal oligomerization domain. In terms of domain architecture, AV-Nsp11N/CoV-Nsp15M spans 6483-6603 (SIRHHPELKL…FAVRKEGQDV (121 aa)). The NendoU domain occupies 6653–6792 (TCRTDMEKDF…NDEKVMTFYL (140 aa)). Active-site residues include His6683, His6698, Lys6738, Lys6841, Asp6925, Lys6965, and Glu6998. One can recognise a Nidovirus-type SAM-dependent 2'-O-MTase domain in the interval 6797-7091 (ASDWKPGYSM…KEVFVGDSMV (295 aa)).

Belongs to the coronaviruses polyprotein 1ab family. As to quaternary structure, interacts with host PHB and PHB2. Interacts with papain-like protease nsp3 and non-structural protein 6. In terms of assembly, monomer. Homodimer. Only the homodimer shows catalytic activity. As to quaternary structure, interacts with nsp8 and nsp12 to form the replication-transcription complex (RTC): nsp12, nsp7, two subunits of nsp8, and up to two subunits of nsp13. Interacts with nsp7, nsp13 and nsp12 to form the replication-transcription complex (RTC): nsp12, nsp7, two subunits of nsp8, and up to two subunits of nsp13. In terms of assembly, interacts with nsp12. As to quaternary structure, interacts with proofreading exoribonuclease nsp14 and 2'-O-methyltransferase nsp16; these interactions enhance nsp14 and nsp16 enzymatic activities. Interacts with nsp7 and nsp8 to form the replication-transcription complex (RTC): nsp12, nsp7, two subunits of nsp8, and up to two subunits of nsp13. Interacts with nsp9. In terms of assembly, interacts with nsp8 to form the replication-transcription complex (RTC): nsp12, nsp7, two subunits of nsp8, and up to two subunits of nsp13. Mn(2+) serves as cofactor. Requires Mg(2+) as cofactor. Specific enzymatic cleavages in vivo by its own proteases yield mature proteins. 3CL-PRO and PL-PRO proteinases are autocatalytically processed.

Its subcellular location is the host membrane. The protein resides in the host cytoplasm. It localises to the host perinuclear region. It is found in the host endoplasmic reticulum-Golgi intermediate compartment. It catalyses the reaction RNA(n) + a ribonucleoside 5'-triphosphate = RNA(n+1) + diphosphate. The enzyme catalyses ATP + H2O = ADP + phosphate + H(+). It carries out the reaction Thiol-dependent hydrolysis of ester, thioester, amide, peptide and isopeptide bonds formed by the C-terminal Gly of ubiquitin (a 76-residue protein attached to proteins as an intracellular targeting signal).. The catalysed reaction is a 5'-end (N(7)-methyl 5'-triphosphoguanosine)-ribonucleoside in mRNA + S-adenosyl-L-methionine = a 5'-end (N(7)-methyl 5'-triphosphoguanosine)-(2'-O-methyl-ribonucleoside) in mRNA + S-adenosyl-L-homocysteine + H(+). It catalyses the reaction uridylyl-uridylyl-ribonucleotide-RNA = a 3'-end uridylyl-2',3'-cyclophospho-uridine-RNA + a 5'-end dephospho-ribonucleoside-RNA. The enzyme catalyses a 5'-end diphospho-ribonucleoside in mRNA + GTP + H(+) = a 5'-end (5'-triphosphoguanosine)-ribonucleoside in mRNA + diphosphate. It carries out the reaction a 5'-end (5'-triphosphoguanosine)-ribonucleoside in mRNA + S-adenosyl-L-methionine = a 5'-end (N(7)-methyl 5'-triphosphoguanosine)-ribonucleoside in mRNA + S-adenosyl-L-homocysteine. Functionally, the replicase polyprotein of coronaviruses is a multifunctional protein: it contains the activities necessary for the transcription of negative stranded RNA, leader RNA, subgenomic mRNAs and progeny virion RNA as well as proteinases responsible for the cleavage of the polyprotein into functional products. In terms of biological role, inhibits host translation by interacting with the 40S ribosomal subunit. The nsp1-40S ribosome complex further induces an endonucleolytic cleavage near the 5'UTR of host mRNAs, targeting them for degradation. Viral mRNAs are not susceptible to nsp1-mediated endonucleolytic RNA cleavage thanks to the presence of a 5'-end leader sequence and are therefore protected from degradation. By suppressing host gene expression, nsp1 facilitates efficient viral gene expression in infected cells and evasion from host immune response. May play a role in the modulation of host cell survival signaling pathway by interacting with host PHB and PHB2. Indeed, these two proteins play a role in maintaining the functional integrity of the mitochondria and protecting cells from various stresses. Its function is as follows. Responsible for the cleavages located at the N-terminus of the replicase polyprotein. In addition, PL-PRO possesses a deubiquitinating/deISGylating activity and processes both 'Lys-48'- and 'Lys-63'-linked polyubiquitin chains from cellular substrates. Participates together with nsp4 in the assembly of virally-induced cytoplasmic double-membrane vesicles necessary for viral replication. Antagonizes innate immune induction of type I interferon by blocking the phosphorylation, dimerization and subsequent nuclear translocation of host IRF3. Also prevents host NF-kappa-B signaling. Functionally, participates in the assembly of virally-induced cytoplasmic double-membrane vesicles necessary for viral replication. In terms of biological role, cleaves the C-terminus of replicase polyprotein at 11 sites. Recognizes substrates containing the core sequence [ILMVF]-Q-|-[SGACN]. Also able to bind an ADP-ribose-1''-phosphate (ADRP). Plays a role in the initial induction of autophagosomes from host endoplasmic reticulum. Later, limits the expansion of these phagosomes that are no longer able to deliver viral components to lysosomes. Its function is as follows. Forms a hexadecamer with nsp8 (8 subunits of each) that may participate in viral replication by acting as a primase. Alternatively, may synthesize substantially longer products than oligonucleotide primers. Functionally, forms a hexadecamer with nsp7 (8 subunits of each) that may participate in viral replication by acting as a primase. Alternatively, may synthesize substantially longer products than oligonucleotide primers. In terms of biological role, forms a primer, NSP9-pU, which is utilized by the polymerase for the initiation of RNA chains. Interacts with ribosome signal recognition particle RNA (SRP). Together with NSP8, suppress protein integration into the cell membrane, thereby disrupting host immune defenses. Plays a pivotal role in viral transcription by stimulating both nsp14 3'-5' exoribonuclease and nsp16 2'-O-methyltransferase activities. Therefore plays an essential role in viral mRNAs cap methylation. Its function is as follows. RNA-directed RNA polymerase that catalyzes the transcription of viral genomic and subgenomic RNAs. Acts in complex with nsp7 and nsp8 to transcribe both the minus and positive strands of genomic RNA. The kinase-like NiRAN domain of NSP12 attaches one or more nucleotides to the amino terminus of NSP9, forming a covalent RNA-protein intermediate that serves as transcription/replication primer. Subgenomic RNAs (sgRNAs) are formed by discontinuous transcription: The polymerase has the ability to pause at transcription-regulating sequences (TRS) and jump to the leader TRS, resulting in a major deletion. This creates a series of subgenomic RNAs that are replicated, transcribed and translated. In addition, Nsp12 is a subunit of the viral RNA capping enzyme that catalyzes the RNA guanylyltransferase reaction for genomic and sub-genomic RNAs. Subsequently, the NiRAN domain transfers RNA to GDP, and forms the core cap structure GpppA-RNA. Functionally, multi-functional protein with a zinc-binding domain in N-terminus displaying RNA and DNA duplex-unwinding activities with 5' to 3' polarity. Activity of helicase is dependent on magnesium. In terms of biological role, plays a role in viral RNA synthesis through two distinct activities. The N7-guanine methyltransferase activity plays a role in the formation of the cap structure GpppA-RNA. The proofreading exoribonuclease reduces the sensitivity of the virus to RNA mutagens during replication. This activity acts on both ssRNA and dsRNA in a 3'-5' direction. Plays a role in viral transcription/replication and prevents the simultaneous activation of host cell dsRNA sensors, such as MDA5/IFIH1, OAS, and PKR. Acts by degrading the 5'-polyuridines generated during replication of the poly(A) region of viral genomic and subgenomic RNAs. Catalyzes a two-step reaction in which a 2'3'-cyclic phosphate (2'3'-cP) is first generated by 2'-O transesterification, which is then hydrolyzed to a 3'-phosphate (3'-P). If not degraded, poly(U) RNA would hybridize with poly(A) RNA tails and activate host dsRNA sensors. Its function is as follows. Methyltransferase that mediates mRNA cap 2'-O-ribose methylation to the 5'-cap structure of viral mRNAs. N7-methyl guanosine cap is a prerequisite for binding of nsp16. Therefore plays an essential role in viral mRNAs cap methylation which is essential to evade immune system. The sequence is that of Replicase polyprotein 1ab (rep) from Bos taurus (Bovine).